Here is a 97-residue protein sequence, read N- to C-terminus: UPF0250 protein HD_2015 (97 aa).

Belongs to the UPF0250 family.

This chain is UPF0250 protein HD_2015, found in Haemophilus ducreyi (strain 35000HP / ATCC 700724).